The primary structure comprises 240 residues: Pyridoxine 5'-phosphate synthase (240 aa).

Asparagine 7 contacts 3-amino-2-oxopropyl phosphate. Residue aspartate 9–histidine 10 coordinates 1-deoxy-D-xylulose 5-phosphate. Arginine 18 contributes to the 3-amino-2-oxopropyl phosphate binding site. Catalysis depends on histidine 43, which acts as the Proton acceptor. Positions 45 and 50 each coordinate 1-deoxy-D-xylulose 5-phosphate. The Proton acceptor role is filled by glutamate 70. Threonine 100 is a 1-deoxy-D-xylulose 5-phosphate binding site. Histidine 191 functions as the Proton donor in the catalytic mechanism. 3-amino-2-oxopropyl phosphate-binding positions include glycine 192 and glycine 213–histidine 214.

It belongs to the PNP synthase family. As to quaternary structure, homooctamer; tetramer of dimers.

The protein localises to the cytoplasm. It carries out the reaction 3-amino-2-oxopropyl phosphate + 1-deoxy-D-xylulose 5-phosphate = pyridoxine 5'-phosphate + phosphate + 2 H2O + H(+). Its pathway is cofactor biosynthesis; pyridoxine 5'-phosphate biosynthesis; pyridoxine 5'-phosphate from D-erythrose 4-phosphate: step 5/5. Catalyzes the complicated ring closure reaction between the two acyclic compounds 1-deoxy-D-xylulose-5-phosphate (DXP) and 3-amino-2-oxopropyl phosphate (1-amino-acetone-3-phosphate or AAP) to form pyridoxine 5'-phosphate (PNP) and inorganic phosphate. The protein is Pyridoxine 5'-phosphate synthase of Trichodesmium erythraeum (strain IMS101).